We begin with the raw amino-acid sequence, 172 residues long: Large ribosomal subunit protein uL10 (172 aa).

It belongs to the universal ribosomal protein uL10 family. Part of the ribosomal stalk of the 50S ribosomal subunit. The N-terminus interacts with L11 and the large rRNA to form the base of the stalk. The C-terminus forms an elongated spine to which L12 dimers bind in a sequential fashion forming a multimeric L10(L12)X complex.

Its function is as follows. Forms part of the ribosomal stalk, playing a central role in the interaction of the ribosome with GTP-bound translation factors. This is Large ribosomal subunit protein uL10 from Chlamydia trachomatis serovar A (strain ATCC VR-571B / DSM 19440 / HAR-13).